Here is a 425-residue protein sequence, read N- to C-terminus: Formyl-CoA:oxalate CoA-transferase (425 aa).

Residues 17–18 (QS), Arg38, 72–75 (LDTK), 96–98 (NFG), Arg104, and 136–139 (KVYE) each bind CoA. The active-site Nucleophile is Asp168. 247 to 249 (GGQ) contributes to the substrate binding site.

This sequence belongs to the CoA-transferase III family. Frc subfamily. In terms of assembly, homodimer.

The enzyme catalyses formyl-CoA + oxalate = oxalyl-CoA + formate. It functions in the pathway metabolic intermediate degradation; oxalate degradation; CO(2) and formate from oxalate: step 1/2. Involved in the catabolism of oxalate and in the adapatation to low pH via the induction of the oxalate-dependent acid tolerance response (ATR). Catalyzes the transfer of the CoA moiety from formyl-CoA to oxalate. The polypeptide is Formyl-CoA:oxalate CoA-transferase (Bradyrhizobium sp. (strain ORS 278)).